The sequence spans 353 residues: 26S proteasome non-ATPase regulatory subunit 8 (353 aa).

The segment at 1–25 (MFIKGRAAKTPRGEPRRSSRGGRKL) is disordered. One can recognise a PCI domain in the interval 165-334 (PSFERYMAQL…QQKPEDSTIP (170 aa)). Residue Lys300 forms a Glycyl lysine isopeptide (Lys-Gly) (interchain with G-Cter in SUMO2) linkage.

Belongs to the proteasome subunit S14 family. As to quaternary structure, component of the 19S proteasome regulatory particle complex. The 26S proteasome consists of a 20S core particle (CP) and two 19S regulatory subunits (RP). The regulatory particle is made of a lid composed of 9 subunits including PSMD8, a base containing 6 ATPases and few additional components. Interacts with DDI2. Interacts with TASOR. Expressed in the Sertoli cells of the testis.

In terms of biological role, component of the 26S proteasome, a multiprotein complex involved in the ATP-dependent degradation of ubiquitinated proteins. This complex plays a key role in the maintenance of protein homeostasis by removing misfolded or damaged proteins, which could impair cellular functions, and by removing proteins whose functions are no longer required. Therefore, the proteasome participates in numerous cellular processes, including cell cycle progression, apoptosis, or DNA damage repair. The chain is 26S proteasome non-ATPase regulatory subunit 8 (Psmd8) from Mus musculus (Mouse).